Consider the following 119-residue polypeptide: Transcription and mRNA export factor SUS1 (119 aa).

It belongs to the ENY2 family. As to quaternary structure, component of the nuclear pore complex (NPC)-associated TREX-2 complex (transcription and export complex 2), composed of at least SUS1, SAC3, THP1, SEM1, and CDC31. TREX-2 contains 2 SUS1 chains. The TREX-2 complex interacts with the nucleoporin NUP1. Component of the 1.8 MDa SAGA transcription coactivator-HAT complex. SAGA is built of 5 distinct domains with specialized functions. Within the SAGA complex, SUS1, SGF11, SGF73 and UBP8 form an additional subcomplex of SAGA called the DUB module (deubiquitination module). Interacts directly with THP1, SAC3, SGF11, and with the RNA polymerase II.

The protein resides in the nucleus. Its subcellular location is the nucleoplasm. It is found in the cytoplasm. The protein localises to the P-body. Its function is as follows. Involved in mRNA export coupled transcription activation by association with both the TREX-2 and the SAGA complexes. At the promoters, SAGA is required for recruitment of the basal transcription machinery. It influences RNA polymerase II transcriptional activity through different activities such as TBP interaction and promoter selectivity, interaction with transcription activators, and chromatin modification through histone acetylation and deubiquitination. Within the SAGA complex, participates in a subcomplex required for deubiquitination of H2B and for the maintenance of steady-state H3 methylation levels. The TREX-2 complex functions in docking export-competent ribonucleoprotein particles (mRNPs) to the nuclear entrance of the nuclear pore complex (nuclear basket). TREX-2 participates in mRNA export and accurate chromatin positioning in the nucleus by tethering genes to the nuclear periphery. May also be involved in cytoplasmic mRNA decay by interaction with components of P-bodies. The chain is Transcription and mRNA export factor SUS1 from Candida albicans (strain SC5314 / ATCC MYA-2876) (Yeast).